A 275-amino-acid polypeptide reads, in one-letter code: Probable CCR4-associated factor 1 homolog 7 (275 aa).

4 residues coordinate a divalent metal cation: Asp40, Glu42, Asp167, and Asp236.

This sequence belongs to the CAF1 family. Component of the CCR4-NOT complex, at least composed of CRR4 and CAF1 proteins. A divalent metal cation serves as cofactor.

The protein localises to the nucleus. The protein resides in the cytoplasm. It carries out the reaction Exonucleolytic cleavage of poly(A) to 5'-AMP.. In terms of biological role, ubiquitous transcription factor required for a diverse set of processes. It is a component of the CCR4 complex involved in the control of gene expression. The chain is Probable CCR4-associated factor 1 homolog 7 (CAF1-7) from Arabidopsis thaliana (Mouse-ear cress).